Reading from the N-terminus, the 201-residue chain is MLELVAATLGGYLLGSVPFGLVLTRLAGLGDIRQIGSGNIGATNVLRTGRKGLALATLLLDGGKGAIAVGLVWVLLGREMVPVAGFAAVLGHNFPVWLGFKGGKGVATTIGTLLAAAWPVGLACIGTWLVSAAIFRISSLSALIALAASPGFALYFAGPQYALMAAGLAVMGFYRHKANIIRLIRGEEPRIGGKKKTESEG.

5 helical membrane passes run 4 to 24 (LVAATLGGYLLGSVPFGLVLT), 55 to 75 (LATLLLDGGKGAIAVGLVWVL), 80 to 100 (MVPVAGFAAVLGHNFPVWLGF), 110 to 130 (IGTLLAAAWPVGLACIGTWLV), and 152 to 174 (FALYFAGPQYALMAAGLAVMGFY).

The protein belongs to the PlsY family. Probably interacts with PlsX.

Its subcellular location is the cell inner membrane. The enzyme catalyses an acyl phosphate + sn-glycerol 3-phosphate = a 1-acyl-sn-glycero-3-phosphate + phosphate. Its pathway is lipid metabolism; phospholipid metabolism. Its function is as follows. Catalyzes the transfer of an acyl group from acyl-phosphate (acyl-PO(4)) to glycerol-3-phosphate (G3P) to form lysophosphatidic acid (LPA). This enzyme utilizes acyl-phosphate as fatty acyl donor, but not acyl-CoA or acyl-ACP. The polypeptide is Glycerol-3-phosphate acyltransferase (Paramagnetospirillum magneticum (strain ATCC 700264 / AMB-1) (Magnetospirillum magneticum)).